Reading from the N-terminus, the 525-residue chain is GMP synthase [glutamine-hydrolyzing] (525 aa).

In terms of domain architecture, Glutamine amidotransferase type-1 spans 9 to 207 (RILILDFGSQ…ILDICGCEAL (199 aa)). Residue Cys-86 is the Nucleophile of the active site. Catalysis depends on residues His-181 and Glu-183. The region spanning 208 to 400 (WTPSKIAEDA…LGLPYDMVYR (193 aa)) is the GMPS ATP-PPase domain. An ATP-binding site is contributed by 235-241 (SGGVDSS).

As to quaternary structure, homodimer.

The catalysed reaction is XMP + L-glutamine + ATP + H2O = GMP + L-glutamate + AMP + diphosphate + 2 H(+). It participates in purine metabolism; GMP biosynthesis; GMP from XMP (L-Gln route): step 1/1. Functionally, catalyzes the synthesis of GMP from XMP. In Pseudomonas savastanoi pv. phaseolicola (strain 1448A / Race 6) (Pseudomonas syringae pv. phaseolicola (strain 1448A / Race 6)), this protein is GMP synthase [glutamine-hydrolyzing].